We begin with the raw amino-acid sequence, 122 residues long: Small ribosomal subunit protein uS13 (122 aa).

The disordered stretch occupies residues 98-122; it reads VRGQKTKSNARTRKGPRPSRIKKKK. Positions 101-122 are enriched in basic residues; that stretch reads QKTKSNARTRKGPRPSRIKKKK.

It belongs to the universal ribosomal protein uS13 family. As to quaternary structure, part of the 30S ribosomal subunit. Forms a loose heterodimer with protein S19. Forms two bridges to the 50S subunit in the 70S ribosome.

Located at the top of the head of the 30S subunit, it contacts several helices of the 16S rRNA. In the 70S ribosome it contacts the 23S rRNA (bridge B1a) and protein L5 of the 50S subunit (bridge B1b), connecting the 2 subunits; these bridges are implicated in subunit movement. Contacts the tRNAs in the A and P-sites. The polypeptide is Small ribosomal subunit protein uS13 (Thermosipho africanus (strain TCF52B)).